Consider the following 78-residue polypeptide: Probable [Fe-S]-dependent transcriptional repressor (78 aa).

Cys-56, Cys-61, Cys-64, and Cys-70 together coordinate iron-sulfur cluster.

Belongs to the FeoC family.

Functionally, may function as a transcriptional regulator that controls feoABC expression. This chain is Probable [Fe-S]-dependent transcriptional repressor, found in Escherichia coli O17:K52:H18 (strain UMN026 / ExPEC).